A 902-amino-acid chain; its full sequence is Phosphoenolpyruvate carboxylase (902 aa).

His132 is an active-site residue. The tract at residues Asp327–Tyr346 is disordered. The active site involves Lys561.

It belongs to the PEPCase type 1 family. Mg(2+) serves as cofactor.

The catalysed reaction is oxaloacetate + phosphate = phosphoenolpyruvate + hydrogencarbonate. Functionally, forms oxaloacetate, a four-carbon dicarboxylic acid source for the tricarboxylic acid cycle. This is Phosphoenolpyruvate carboxylase from Corynebacterium diphtheriae (strain ATCC 700971 / NCTC 13129 / Biotype gravis).